Here is an 858-residue protein sequence, read N- to C-terminus: DNA mismatch repair protein MutS (858 aa).

602–609 (GPNMSGKS) is an ATP binding site.

The protein belongs to the DNA mismatch repair MutS family.

Its function is as follows. This protein is involved in the repair of mismatches in DNA. It is possible that it carries out the mismatch recognition step. This protein has a weak ATPase activity. Overexpression of mutSL partially suppresses the high spontaneous mutation frequency of a ytkD/mutM/mutY triple disruption which lacks the system required to prevent damage by oxidized guanine (8-oxo-dGTP). This suggests that MutSL also functions to repair mismatches due to oxidative stress in both growing and stationary phase cells. The polypeptide is DNA mismatch repair protein MutS (Bacillus subtilis (strain 168)).